Reading from the N-terminus, the 132-residue chain is Ribonuclease P protein component (132 aa).

It belongs to the RnpA family. Consists of a catalytic RNA component (M1 or rnpB) and a protein subunit.

The enzyme catalyses Endonucleolytic cleavage of RNA, removing 5'-extranucleotides from tRNA precursor.. Its function is as follows. RNaseP catalyzes the removal of the 5'-leader sequence from pre-tRNA to produce the mature 5'-terminus. It can also cleave other RNA substrates such as 4.5S RNA. The protein component plays an auxiliary but essential role in vivo by binding to the 5'-leader sequence and broadening the substrate specificity of the ribozyme. The chain is Ribonuclease P protein component from Marinomonas sp. (strain MWYL1).